A 513-amino-acid polypeptide reads, in one-letter code: Aromatic amino acid aminotransferase 2 (513 aa).

Phosphoserine is present on residues Ser90 and Ser92. Residues Tyr102, 143 to 144 (SN), Asn232, Tyr263, and 314 to 316 (TFS) each bind pyridoxal 5'-phosphate. Residue Asn232 participates in substrate binding. Lys317 carries the post-translational modification N6-(pyridoxal phosphate)lysine. Residue Arg324 participates in pyridoxal 5'-phosphate binding. Arg481 is a binding site for substrate.

The protein belongs to the class-I pyridoxal-phosphate-dependent aminotransferase family. It depends on pyridoxal 5'-phosphate as a cofactor.

Its subcellular location is the cytoplasm. The catalysed reaction is an aromatic L-alpha-amino acid + 2-oxoglutarate = an aromatic oxo-acid + L-glutamate. It catalyses the reaction an aromatic L-alpha-amino acid + 4-methylsulfanyl-2-oxobutanoate = an aromatic oxo-acid + L-methionine. It carries out the reaction L-kynurenine + 2-oxoglutarate = kynurenate + L-glutamate + H2O. It functions in the pathway amino-acid biosynthesis; L-methionine biosynthesis via salvage pathway; L-methionine from S-methyl-5-thio-alpha-D-ribose 1-phosphate: step 6/6. It participates in amino-acid degradation; L-kynurenine degradation; kynurenate from L-kynurenine: step 1/2. In terms of biological role, general aromatic amino acid transaminase involved in several otherwise unrelated metabolic pathways. Mainly involved in tryptophan degradation. Active with phenylalanine, tyrosine and tryptophan as amino donors and with phenylpyruvate, hydroxyphenylpyruvate and pyruvate as amino acceptors. Does not accept glutamate or 2-oxoglutarate as substrates. Also active with methionine, leucine, glutamine and kynurenine. Catalyzes the formation of methionine from 2-keto-4-methylthiobutyrate (KMTB) in the methionine salvage pathway primarily using aromatic amino acids (tyrosine, phenylalanine and tryptophan) as the amino donors. Catalyzes the irreversible transamination of the L-tryptophan metabolite L-kynurenine to form kynurenic acid (KA) with pyruvate as amino acceptor. In Saccharomyces cerevisiae (strain ATCC 204508 / S288c) (Baker's yeast), this protein is Aromatic amino acid aminotransferase 2.